A 468-amino-acid chain; its full sequence is 6-phospho-beta-galactosidase (468 aa).

D-galactose 6-phosphate contacts are provided by Q19, H116, N159, E160, and N297. The active-site Proton donor is the E160. E375 serves as the catalytic Nucleophile. Positions 428, 429, 435, and 437 each coordinate D-galactose 6-phosphate.

The protein belongs to the glycosyl hydrolase 1 family.

The catalysed reaction is a 6-phospho-beta-D-galactoside + H2O = D-galactose 6-phosphate + an alcohol. Its pathway is carbohydrate metabolism; lactose degradation; D-galactose 6-phosphate and beta-D-glucose from lactose 6-phosphate: step 1/1. The polypeptide is 6-phospho-beta-galactosidase (Streptococcus pyogenes serotype M18 (strain MGAS8232)).